Consider the following 302-residue polypeptide: Phospho-N-acetylmuramoyl-pentapeptide-transferase (302 aa).

The next 10 helical transmembrane spans lie at 1-21 (MIAA…KLFR), 42-62 (GTPT…GMIS), 67-87 (MVLL…FLSV), 95-115 (LKTY…LLLI), 123-143 (FFGS…LVIV), 154-174 (GLDG…WFFL), 178-198 (GVSE…LVFN), 204-224 (IFMG…VSVL), 229-249 (FYLV…ILQV), and 279-299 (IVAV…EIFG).

The protein belongs to the glycosyltransferase 4 family. MraY subfamily. It depends on Mg(2+) as a cofactor.

It is found in the cell inner membrane. The enzyme catalyses UDP-N-acetyl-alpha-D-muramoyl-L-alanyl-gamma-D-glutamyl-meso-2,6-diaminopimeloyl-D-alanyl-D-alanine + di-trans,octa-cis-undecaprenyl phosphate = di-trans,octa-cis-undecaprenyl diphospho-N-acetyl-alpha-D-muramoyl-L-alanyl-D-glutamyl-meso-2,6-diaminopimeloyl-D-alanyl-D-alanine + UMP. The protein operates within cell wall biogenesis; peptidoglycan biosynthesis. Its function is as follows. Catalyzes the initial step of the lipid cycle reactions in the biosynthesis of the cell wall peptidoglycan: transfers peptidoglycan precursor phospho-MurNAc-pentapeptide from UDP-MurNAc-pentapeptide onto the lipid carrier undecaprenyl phosphate, yielding undecaprenyl-pyrophosphoryl-MurNAc-pentapeptide, known as lipid I. This is Phospho-N-acetylmuramoyl-pentapeptide-transferase from Thermotoga maritima (strain ATCC 43589 / DSM 3109 / JCM 10099 / NBRC 100826 / MSB8).